A 127-amino-acid chain; its full sequence is Holo-[acyl-carrier-protein] synthase (127 aa).

Residues aspartate 9 and glutamate 58 each coordinate Mg(2+).

Belongs to the P-Pant transferase superfamily. AcpS family. It depends on Mg(2+) as a cofactor.

The protein localises to the cytoplasm. It catalyses the reaction apo-[ACP] + CoA = holo-[ACP] + adenosine 3',5'-bisphosphate + H(+). Functionally, transfers the 4'-phosphopantetheine moiety from coenzyme A to a Ser of acyl-carrier-protein. This chain is Holo-[acyl-carrier-protein] synthase, found in Shewanella sp. (strain ANA-3).